The sequence spans 227 residues: Cytochrome c oxidase subunit 2 (227 aa).

The Mitochondrial intermembrane portion of the chain corresponds to 1–14 (MAHPVQLGLQDATS). Residues 15–45 (PVMEELITFHDQALMAMFLISFLILYALSST) form a helical membrane-spanning segment. At 46-59 (LTTKLTNTNITDAQ) the chain is on the mitochondrial matrix side. Residues 60–87 (EMETIWTILPAVILILIALPSLRILYMT) traverse the membrane as a helical segment. Over 88–227 (DEINNPSFTI…IFEMGPVFTL (140 aa)) the chain is Mitochondrial intermembrane. Positions 161, 196, 198, 200, 204, and 207 each coordinate Cu cation. Residue Glu-198 coordinates Mg(2+).

The protein belongs to the cytochrome c oxidase subunit 2 family. As to quaternary structure, component of the cytochrome c oxidase (complex IV, CIV), a multisubunit enzyme composed of 14 subunits. The complex is composed of a catalytic core of 3 subunits MT-CO1, MT-CO2 and MT-CO3, encoded in the mitochondrial DNA, and 11 supernumerary subunits COX4I, COX5A, COX5B, COX6A, COX6B, COX6C, COX7A, COX7B, COX7C, COX8 and NDUFA4, which are encoded in the nuclear genome. The complex exists as a monomer or a dimer and forms supercomplexes (SCs) in the inner mitochondrial membrane with NADH-ubiquinone oxidoreductase (complex I, CI) and ubiquinol-cytochrome c oxidoreductase (cytochrome b-c1 complex, complex III, CIII), resulting in different assemblies (supercomplex SCI(1)III(2)IV(1) and megacomplex MCI(2)III(2)IV(2)). Found in a complex with TMEM177, COA6, COX18, COX20, SCO1 and SCO2. Interacts with TMEM177 in a COX20-dependent manner. Interacts with COX20. Interacts with COX16. It depends on Cu cation as a cofactor.

It is found in the mitochondrion inner membrane. It carries out the reaction 4 Fe(II)-[cytochrome c] + O2 + 8 H(+)(in) = 4 Fe(III)-[cytochrome c] + 2 H2O + 4 H(+)(out). Functionally, component of the cytochrome c oxidase, the last enzyme in the mitochondrial electron transport chain which drives oxidative phosphorylation. The respiratory chain contains 3 multisubunit complexes succinate dehydrogenase (complex II, CII), ubiquinol-cytochrome c oxidoreductase (cytochrome b-c1 complex, complex III, CIII) and cytochrome c oxidase (complex IV, CIV), that cooperate to transfer electrons derived from NADH and succinate to molecular oxygen, creating an electrochemical gradient over the inner membrane that drives transmembrane transport and the ATP synthase. Cytochrome c oxidase is the component of the respiratory chain that catalyzes the reduction of oxygen to water. Electrons originating from reduced cytochrome c in the intermembrane space (IMS) are transferred via the dinuclear copper A center (CU(A)) of subunit 2 and heme A of subunit 1 to the active site in subunit 1, a binuclear center (BNC) formed by heme A3 and copper B (CU(B)). The BNC reduces molecular oxygen to 2 water molecules using 4 electrons from cytochrome c in the IMS and 4 protons from the mitochondrial matrix. The sequence is that of Cytochrome c oxidase subunit 2 (MT-CO2) from Papio anubis (Olive baboon).